A 184-amino-acid polypeptide reads, in one-letter code: uncharacterized protein (184 aa).

The disordered stretch occupies residues 146 to 177 (HPKTSLAQQPNAKATQPPLSKETLNTAKETDP). The segment covering 150–172 (SLAQQPNAKATQPPLSKETLNTA) has biased composition (polar residues).

This is an uncharacterized protein from Picosynechococcus sp. (strain ATCC 27264 / PCC 7002 / PR-6) (Agmenellum quadruplicatum).